Consider the following 478-residue polypeptide: Zinc finger protein 410 (478 aa).

The segment at 187–213 (NAKTSSNGENVHLGSGDGQSKDSGPLP) is disordered. C2H2-type zinc fingers lie at residues 219–243 (LKCT…LKTH), 249–273 (FICP…MRTH), 279–303 (FMCH…RRIH), 309–333 (FLCE…LVVH), and 339–362 (HQCQ…RKHH). The Zn(2+) site is built by C221, C226, H239, H243, C251, C256, H269, H273, C281, C286, H299, H303, C311, C316, H329, H333, C341, C344, H357, and H361.

Interacts with CDKN2A/p14ARF. In terms of processing, sumoylated. Sumoylation increases its half-life, possibly by blocking ubiquitin-mediated degradation. Post-translationally, O-glycosylated. O-GlcNAcylation may occur in response to increasing glucose levels and affect transcription factor activity. In terms of tissue distribution, widely expressed.

The protein resides in the nucleus. It is found in the chromosome. Its function is as follows. Transcription factor that binds to the sequence motif 5'-CATCCCATAATA-3', and is specifically required to silence expression of fetal hemoglobin in adult erythroid cells. Prevents expression of fetal hemoglobin genes HBG1 and HBG2 through CHD4: acts as a direct transcriptional activator of CHD4, a central component of the NuRD complex that represses transcription of fetal hemoglobin genes HBG1 and HBG2 in erythroid cells. May also activate transcription of matrix-remodeling genes such as MMP1 during fibroblast senescence. May activate transcription of the gap junction gene GJC1, perhaps in response to increasing glucose. However, recent studies suggest that ZNF410 is dedicated to regulate expression of a single gene: CHD4. In Homo sapiens (Human), this protein is Zinc finger protein 410.